We begin with the raw amino-acid sequence, 588 residues long: Snake venom 5'-nucleotidase (588 aa).

A signal peptide spans 1–40; the sequence is MQTPKRRRGAQGCPRSSPSPPLLLLVRAVWFCAALSVAAG. The Zn(2+) site is built by D51 and H53. A disulfide bridge connects residues C66 and C71. 2 residues coordinate Zn(2+): D99 and N131. N167 is a glycosylation site (N-linked (GlcNAc...) asparagine). Positions 234 and 257 each coordinate Zn(2+). N-linked (GlcNAc...) asparagine glycans are attached at residues N347 and N361. Cystine bridges form between C367–C372 and C379–C401. AMP is bound at residue R368. AMP-binding residues include N404 and R409. Residue N418 is glycosylated (N-linked (GlcNAc...) asparagine). An AMP-binding site is contributed by F432. A disulfide bond links C491 and C494. F515 and D521 together coordinate AMP. Residue N532 is glycosylated (N-linked (GlcNAc...) asparagine). S564 carries GPI-anchor amidated serine lipidation. Positions 565–588 are cleaved as a propeptide — removed in mature form; the sequence is AGTLFQAQLFLTWGLCVSLLYFIL.

The protein belongs to the 5'-nucleotidase family. It depends on Zn(2+) as a cofactor. Post-translationally, venom 5'-nucleotidases (or a part thereof) may be released into the venom via exosome-like vesicles. They may be attached via a GPI anchor to the membrane of these vesicles. Soluble forms of 5'-nucleotidase might be released by cleavage of the ectodomain in the exosome-like vesicles or venom gland cells. As to expression, expressed by the venom gland.

Its subcellular location is the membrane. It catalyses the reaction a ribonucleoside 5'-phosphate + H2O = a ribonucleoside + phosphate. Its function is as follows. Hydrolyzes nucleotides into nucleosides. Snake venom 5'-nucleotidases are widely distributed among venomous snake taxa, but there is a lack of information about their biological activities. They have been shown to inhibit platelet aggregation. This effect may be due to the liberation of inhibitory AMP or adenosine by its action on ADP released upon initiation of aggregation. Venom 5'-nucleotidases are also known to synergistically act in vivo with other toxins like ADPases, phospholipases, and disintegrins to exert a more pronounced anti-coagulant effect. The chain is Snake venom 5'-nucleotidase from Crotalus adamanteus (Eastern diamondback rattlesnake).